A 315-amino-acid chain; its full sequence is Ester hydrolase C11orf54 homolog (315 aa).

Positions 266, 268, and 278 each coordinate Zn(2+).

As to quaternary structure, monomer. Requires Zn(2+) as cofactor.

It is found in the nucleus. Its subcellular location is the cytoplasm. In terms of biological role, exhibits ester hydrolase activity on the substrate p-nitrophenyl acetate, in vitro. Regulates DNA damage and repair by regulating HIF1A degradation via chaperone-mediated autophagy (CMA). The sequence is that of Ester hydrolase C11orf54 homolog from Mus musculus (Mouse).